The primary structure comprises 340 residues: MATIKDVAKLVGVSTTTVSHVINKTRFVAEDTTKAVWEAIASLNYSPSAVARSLKVNTTKSIGMIITTSEAPYFAEIVLAVEEYCYRQGYSLFLCNTQNDAEKVQNHLDMLIKKRVDGILVMCSEYTENSLALFNGTNVPMVVMDWGPNDGKSDRIIDHCLDGGYMATKHLIDNGHRDIAIIAGYLYKTTAKARYDGFVKAMTEAGLLIRKEWIFENDFQPEGGYESMNNLLNQDKLPTAVICGCDAMALGVISAITEKGLSVPQDISVIGYDNIHSSRFYAPPLTTIHQSKTRLGQMAIDTLLERIQQHNEQPSEPVTPKVLEFYPELVVRSSVRNLNQ.

Residues 2-56 form the HTH lacI-type domain; that stretch reads ATIKDVAKLVGVSTTTVSHVINKTRFVAEDTTKAVWEAIASLNYSPSAVARSLKV. Positions 4-23 form a DNA-binding region, H-T-H motif; the sequence is IKDVAKLVGVSTTTVSHVIN. The DNA-binding element occupies 48-56; it reads SAVARSLKV. Residues Y73, K188, T190, F219, and D273 each contribute to the hypoxanthine site.

Homodimer.

It functions in the pathway purine metabolism; purine nucleotide biosynthesis [regulation]. Functionally, is the main repressor of the genes involved in the de novo synthesis of purine nucleotides, regulating purB, purC, purEK, purF, purHD, purL, purMN and guaBA expression. PurR is allosterically activated to bind its cognate DNA by binding the purine corepressors, hypoxanthine or guanine, thereby effecting transcription repression. In Glaesserella parasuis serovar 5 (strain SH0165) (Haemophilus parasuis), this protein is HTH-type transcriptional repressor PurR.